Here is a 98-residue protein sequence, read N- to C-terminus: Putative protein adenylyltransferase MJ0126 (98 aa).

The GSX(10)DXD motif motif lies at 31-45 (GSYARNEQTETSDID). Mg(2+)-binding residues include D43, D45, and D75.

This sequence belongs to the MntA antitoxin family. Probably forms a complex with cognate toxin MJ0125. Mg(2+) serves as cofactor.

It catalyses the reaction L-tyrosyl-[protein] + ATP = O-(5'-adenylyl)-L-tyrosyl-[protein] + diphosphate. The catalysed reaction is O-(5'-adenylyl)-L-tyrosyl-[protein] + ATP = O-[5'-(adenylyl-(5'-&gt;3')-adenylyl)]-L-tyrosyl-[protein] + diphosphate. Probable antitoxin component of a putative type VII toxin-antitoxin (TA) system. Neutralizes cognate toxic MJ0125 by di-AMPylation. The chain is Putative protein adenylyltransferase MJ0126 from Methanocaldococcus jannaschii (strain ATCC 43067 / DSM 2661 / JAL-1 / JCM 10045 / NBRC 100440) (Methanococcus jannaschii).